Consider the following 352-residue polypeptide: tRNA (guanine(26)-N(2))-dimethyltransferase (352 aa).

Positions 4–350 (ILNKEGAVEF…ANYDEIARIL (347 aa)) constitute a Trm1 methyltransferase domain. Arg-39, Arg-65, Asp-83, Asp-109, and Ala-110 together coordinate S-adenosyl-L-methionine.

Belongs to the class I-like SAM-binding methyltransferase superfamily. Trm1 family.

The enzyme catalyses guanosine(26) in tRNA + 2 S-adenosyl-L-methionine = N(2)-dimethylguanosine(26) in tRNA + 2 S-adenosyl-L-homocysteine + 2 H(+). Functionally, dimethylates a single guanine residue at position 26 of a number of tRNAs using S-adenosyl-L-methionine as donor of the methyl groups. The polypeptide is tRNA (guanine(26)-N(2))-dimethyltransferase (Pyrobaculum islandicum (strain DSM 4184 / JCM 9189 / GEO3)).